Reading from the N-terminus, the 309-residue chain is Mitochondrial import receptor subunit TOM34 (309 aa).

Ser8 bears the Phosphoserine mark. 3 TPR repeats span residues 9-42 (VEQLRAAGNQNFRNGQYGEASALYERALRLLQAR), 51-84 (SVLYSNRAACYLKDGNCTDCIKDCTSALALVPFS), and 85-118 (IKPLLRRASAYEALEKYALAYVDYKTVLQIDNSV). The segment at 158 to 189 (WNSLPSDNHKETAKTKSKEATATKSRVPSAGD) is disordered. Residue Ser160 is modified to Phosphoserine. The segment covering 164-178 (DNHKETAKTKSKEAT) has biased composition (basic and acidic residues). Phosphoserine is present on Ser186. TPR repeat units follow at residues 193–226 (AKALKEEGNDLVKKGNHKKAIEKYSESLLCSSLE), 227–260 (SATYSNRALCHLVLKQYKEAVKDCTEALKLDGKN), and 261–294 (VKAFYRRAQAYKALKDYKSSLSDISSLLQIEPRN). Lys197 is covalently cross-linked (Glycyl lysine isopeptide (Lys-Gly) (interchain with G-Cter in SUMO2)).

The protein belongs to the Tom34 family. As to quaternary structure, interacts with HSP90A, VCP, ATP6V1D, KIAA0665, AMPK, and DMAP1 through its TPR repeat. As to expression, isoform 1 is ubiquitously expressed while isoform 2 is expressed only in mature testicular germ cells. Isoform 1 is expressed in all testicular cells. Isoform 2 is highly expressed in early to late pachytene cells but expression is significantly decreased in round spermatid cells.

Its subcellular location is the cytoplasm. The protein localises to the mitochondrion outer membrane. In terms of biological role, plays a role in the import of cytosolically synthesized preproteins into mitochondria. Binds the mature portion of precursor proteins. Interacts with cellular components, and possesses weak ATPase activity. May be a chaperone-like protein that helps to keep newly synthesized precursors in an unfolded import compatible state. This chain is Mitochondrial import receptor subunit TOM34 (Tomm34), found in Mus musculus (Mouse).